The primary structure comprises 206 residues: Large ribosomal subunit protein uL4 (206 aa).

The tract at residues A43–S78 is disordered. The segment covering H58–G70 has biased composition (basic residues).

Belongs to the universal ribosomal protein uL4 family. As to quaternary structure, part of the 50S ribosomal subunit.

Functionally, one of the primary rRNA binding proteins, this protein initially binds near the 5'-end of the 23S rRNA. It is important during the early stages of 50S assembly. It makes multiple contacts with different domains of the 23S rRNA in the assembled 50S subunit and ribosome. Forms part of the polypeptide exit tunnel. The sequence is that of Large ribosomal subunit protein uL4 from Polynucleobacter necessarius subsp. necessarius (strain STIR1).